The sequence spans 120 residues: MFLLHEYDIFWAFLIISSVIPILAFLISGVLAPINEGPEKLSSYESGIEPMGDAWLQFRIRYYMFALVFVVFDVETVFLYPWAMSFDVLGVSVFVEALIFVLILIVGLVYAWRKGALEWS.

A run of 3 helical transmembrane segments spans residues 9-29 (IFWAFLIISSVIPILAFLISG), 64-84 (MFALVFVVFDVETVFLYPWAM), and 88-108 (VLGVSVFVEALIFVLILIVGL).

It belongs to the complex I subunit 3 family. In terms of assembly, NDH is composed of at least 16 different subunits, 5 of which are encoded in the nucleus.

The protein localises to the plastid. It is found in the chloroplast thylakoid membrane. The catalysed reaction is a plastoquinone + NADH + (n+1) H(+)(in) = a plastoquinol + NAD(+) + n H(+)(out). It carries out the reaction a plastoquinone + NADPH + (n+1) H(+)(in) = a plastoquinol + NADP(+) + n H(+)(out). Its function is as follows. NDH shuttles electrons from NAD(P)H:plastoquinone, via FMN and iron-sulfur (Fe-S) centers, to quinones in the photosynthetic chain and possibly in a chloroplast respiratory chain. The immediate electron acceptor for the enzyme in this species is believed to be plastoquinone. Couples the redox reaction to proton translocation, and thus conserves the redox energy in a proton gradient. The protein is NAD(P)H-quinone oxidoreductase subunit 3, chloroplastic of Ranunculus macranthus (Large buttercup).